The following is a 235-amino-acid chain: Large ribosomal subunit protein uL1 (235 aa).

It belongs to the universal ribosomal protein uL1 family. Part of the 50S ribosomal subunit.

Its function is as follows. Binds directly to 23S rRNA. The L1 stalk is quite mobile in the ribosome, and is involved in E site tRNA release. Functionally, protein L1 is also a translational repressor protein, it controls the translation of the L11 operon by binding to its mRNA. This is Large ribosomal subunit protein uL1 from Blochmanniella floridana.